The following is a 396-amino-acid chain: Tryptophan synthase beta chain (396 aa).

An N6-(pyridoxal phosphate)lysine modification is found at Lys88.

This sequence belongs to the TrpB family. As to quaternary structure, tetramer of two alpha and two beta chains. It depends on pyridoxal 5'-phosphate as a cofactor.

It carries out the reaction (1S,2R)-1-C-(indol-3-yl)glycerol 3-phosphate + L-serine = D-glyceraldehyde 3-phosphate + L-tryptophan + H2O. It functions in the pathway amino-acid biosynthesis; L-tryptophan biosynthesis; L-tryptophan from chorismate: step 5/5. Functionally, the beta subunit is responsible for the synthesis of L-tryptophan from indole and L-serine. The sequence is that of Tryptophan synthase beta chain from Actinobacillus pleuropneumoniae serotype 5b (strain L20).